The chain runs to 342 residues: Dihydroorotase (342 aa).

Histidine 13 and histidine 15 together coordinate Zn(2+). Substrate is bound by residues 15 to 17 and asparagine 41; that span reads HLR. Residues lysine 98, histidine 135, and histidine 173 each coordinate Zn(2+). Residue lysine 98 is modified to N6-carboxylysine. Histidine 135 lines the substrate pocket. Leucine 218 is a binding site for substrate. Aspartate 246 provides a ligand contact to Zn(2+). Aspartate 246 is an active-site residue. Substrate is bound by residues histidine 250 and alanine 262.

It belongs to the metallo-dependent hydrolases superfamily. DHOase family. Class II DHOase subfamily. As to quaternary structure, homodimer. Requires Zn(2+) as cofactor.

The catalysed reaction is (S)-dihydroorotate + H2O = N-carbamoyl-L-aspartate + H(+). It functions in the pathway pyrimidine metabolism; UMP biosynthesis via de novo pathway; (S)-dihydroorotate from bicarbonate: step 3/3. Functionally, catalyzes the reversible cyclization of carbamoyl aspartate to dihydroorotate. The chain is Dihydroorotase from Vibrio vulnificus (strain CMCP6).